Reading from the N-terminus, the 515-residue chain is Histidine ammonia-lyase (515 aa).

Residues 146-148 (ASG) constitute a cross-link (5-imidazolinone (Ala-Gly)). Ser-147 carries the 2,3-didehydroalanine (Ser) modification.

It belongs to the PAL/histidase family. In terms of processing, contains an active site 4-methylidene-imidazol-5-one (MIO), which is formed autocatalytically by cyclization and dehydration of residues Ala-Ser-Gly.

The protein localises to the cytoplasm. The enzyme catalyses L-histidine = trans-urocanate + NH4(+). The protein operates within amino-acid degradation; L-histidine degradation into L-glutamate; N-formimidoyl-L-glutamate from L-histidine: step 1/3. This chain is Histidine ammonia-lyase (hutH), found in Ralstonia nicotianae (strain ATCC BAA-1114 / GMI1000) (Ralstonia solanacearum).